Here is a 612-residue protein sequence, read N- to C-terminus: MSQIILDNISQNETVYNRFVIIHGRVGPRASYCPQTINVKHHENSFPEQTWVVTDLYFKAIIHVVPGDNTILFTTDDGGKLELQVYYQLLVDNPFYCIAFIVGKDSDLSFDAPHGAKNDIDEGIRKLRCAAYLWQAFTAECMYRNGYGRRSFRIEESVQPDTMSCLSPWGTERLTATINILRSDKTAEEIRSVPPDQLFHIAGDAVDKLHLPEPWHYMCMFLDTRYDPSTQKIRGHVALGGGTDMHKLGVFGSHSLHSFPSALEYVVPVFSDARRIPSYLANDANESSTIWECANIGIGAMLHELGHTLGCPHQPDGIMLRSYPIFNRSFTTREFECVRTGSKGLAPVLAKDECSWHHLDMLRFFYHPCFKLPSDPTYPSDIETNYFVKGETITFVNSTGIFLIEIEYNGQTKGWKEFNPPVGEASLTDAEIRSLSNASSNQDYRVRVLSRNFKCIDLNNVPEIIKNAKVESSFGTVYRSERYGLRGCNGKELSNILIAPEKFKPTKIRVHCGLALDGIEVFFGDESVLLGNRGGSPHDFEIQGSQIVGFQIRCGAWVDGISIVLENGKTSPFYGNANGGGLKSYLVPKGFQLVGFYGTLGPFMDSIGFFIK.

Position 303 (H303) interacts with Zn(2+). E304 is a catalytic residue. Residues H307 and H313 each coordinate Zn(2+). The 136-residue stretch at V477–K612 folds into the Jacalin-type lectin domain.

The protein belongs to the peptidase M10B family. It depends on Zn(2+) as a cofactor.

This Schizosaccharomyces pombe (strain 972 / ATCC 24843) (Fission yeast) protein is Putative zinc metalloproteinase C607.06c.